Here is a 338-residue protein sequence, read N- to C-terminus: Glycerol-1-phosphate dehydrogenase [NAD(P)+] (338 aa).

Residues G81–D85 and T103–S106 each bind NAD(+). Position 108 (D108) interacts with substrate. S112 is a binding site for NAD(+). Residue D157 coordinates substrate. D157 and H238 together coordinate Zn(2+). Position 242 (H242) interacts with substrate. H256 lines the Zn(2+) pocket.

The protein belongs to the glycerol-1-phosphate dehydrogenase family. As to quaternary structure, homodimer. Zn(2+) is required as a cofactor.

It is found in the cytoplasm. The enzyme catalyses sn-glycerol 1-phosphate + NAD(+) = dihydroxyacetone phosphate + NADH + H(+). It carries out the reaction sn-glycerol 1-phosphate + NADP(+) = dihydroxyacetone phosphate + NADPH + H(+). It functions in the pathway membrane lipid metabolism; glycerophospholipid metabolism. Its function is as follows. Catalyzes the NAD(P)H-dependent reduction of dihydroxyacetonephosphate (DHAP or glycerone phosphate) to glycerol 1-phosphate (G1P). The G1P thus generated is used as the glycerophosphate backbone of phospholipids in the cellular membranes of Archaea. In Pyrobaculum calidifontis (strain DSM 21063 / JCM 11548 / VA1), this protein is Glycerol-1-phosphate dehydrogenase [NAD(P)+].